A 175-amino-acid chain; its full sequence is Large ribosomal subunit protein uL10 (175 aa).

It belongs to the universal ribosomal protein uL10 family. As to quaternary structure, part of the ribosomal stalk of the 50S ribosomal subunit. The N-terminus interacts with L11 and the large rRNA to form the base of the stalk. The C-terminus forms an elongated spine to which L12 dimers bind in a sequential fashion forming a multimeric L10(L12)X complex.

Functionally, forms part of the ribosomal stalk, playing a central role in the interaction of the ribosome with GTP-bound translation factors. This Thermobifida fusca (strain YX) protein is Large ribosomal subunit protein uL10.